An 86-amino-acid polypeptide reads, in one-letter code: Large ribosomal subunit protein uL23 (86 aa).

It belongs to the universal ribosomal protein uL23 family. Part of the 50S ribosomal subunit. Contacts protein L29.

In terms of biological role, binds to 23S rRNA. One of the proteins that surrounds the polypeptide exit tunnel on the outside of the ribosome. This chain is Large ribosomal subunit protein uL23, found in Methanococcus maripaludis (strain C6 / ATCC BAA-1332).